Here is a 325-residue protein sequence, read N- to C-terminus: MNALTAVQNNAVDSGQDYSGFTLIPSAQSPRLLELTFTEQTTKQFLEQVAEWPVQALEYKSFLRFRVGKILDDLCANQLQPLLLKTLLNRAEGALLINAVGVDDVAQADEMVKLATAVAHLIGRSNFDAMSGQYYARFVVKNVDNSDSYLRQPHRVMELHNDGTYVEEITDYVLMMKIDEQNMQGGNSLLLHLDDWEHLEHYFRHPLARRPMRFAAPPSKNVSKDVFHPVFDVDQQGRPVMRYIDQFVQPKDFEEGVWLSELSDAIETSKGILSVPVPVGKFLLINNLFWLHGRDRFTAHPDLRRELMRQRGYFAYATHHYQTHQ.

Fe cation-binding residues include histidine 160, aspartate 162, and histidine 292.

Belongs to the glutarate hydroxylase family. As to quaternary structure, homotetramer. Fe(2+) serves as cofactor.

It catalyses the reaction glutarate + 2-oxoglutarate + O2 = (S)-2-hydroxyglutarate + succinate + CO2. Its pathway is amino-acid degradation. Acts as an alpha-ketoglutarate-dependent dioxygenase catalyzing hydroxylation of glutarate (GA) to L-2-hydroxyglutarate (L2HG). Functions in a L-lysine degradation pathway that proceeds via cadaverine, glutarate and L-2-hydroxyglutarate. The chain is Glutarate 2-hydroxylase from Escherichia fergusonii (strain ATCC 35469 / DSM 13698 / CCUG 18766 / IAM 14443 / JCM 21226 / LMG 7866 / NBRC 102419 / NCTC 12128 / CDC 0568-73).